The following is a 448-amino-acid chain: Signal recognition particle protein (448 aa).

GTP-binding positions include 101-108 (GLQGSGKT), 182-186 (DSAGR), and 240-243 (SKFD).

It belongs to the GTP-binding SRP family. SRP54 subfamily. As to quaternary structure, part of the signal recognition particle protein translocation system, which is composed of SRP and FtsY. SRP is a ribonucleoprotein composed of Ffh and a 4.5S RNA molecule.

The protein resides in the cytoplasm. The catalysed reaction is GTP + H2O = GDP + phosphate + H(+). Involved in targeting and insertion of nascent membrane proteins into the cytoplasmic membrane. Binds to the hydrophobic signal sequence of the ribosome-nascent chain (RNC) as it emerges from the ribosomes. The SRP-RNC complex is then targeted to the cytoplasmic membrane where it interacts with the SRP receptor FtsY. Interaction with FtsY leads to the transfer of the RNC complex to the Sec translocase for insertion into the membrane, the hydrolysis of GTP by both Ffh and FtsY, and the dissociation of the SRP-FtsY complex into the individual components. The polypeptide is Signal recognition particle protein (Helicobacter pylori (strain ATCC 700392 / 26695) (Campylobacter pylori)).